The chain runs to 219 residues: Elongation factor Ts (219 aa).

The interval 81-84 (SDFV) is involved in Mg(2+) ion dislocation from EF-Tu.

The protein belongs to the EF-Ts family.

It is found in the cytoplasm. Its function is as follows. Associates with the EF-Tu.GDP complex and induces the exchange of GDP to GTP. It remains bound to the aminoacyl-tRNA.EF-Tu.GTP complex up to the GTP hydrolysis stage on the ribosome. The protein is Elongation factor Ts of Koribacter versatilis (strain Ellin345).